A 340-amino-acid polypeptide reads, in one-letter code: L-threonine 3-dehydrogenase (340 aa).

Cysteine 38 contributes to the Zn(2+) binding site. Active-site charge relay system residues include threonine 40 and histidine 43. Histidine 63, glutamate 64, cysteine 93, cysteine 96, cysteine 99, and cysteine 107 together coordinate Zn(2+). Residues isoleucine 175, aspartate 195, arginine 200, 262–264, and 286–287 contribute to the NAD(+) site; these read LGI and IY.

The protein belongs to the zinc-containing alcohol dehydrogenase family. Homotetramer. Requires Zn(2+) as cofactor.

The protein resides in the cytoplasm. The enzyme catalyses L-threonine + NAD(+) = (2S)-2-amino-3-oxobutanoate + NADH + H(+). It participates in amino-acid degradation; L-threonine degradation via oxydo-reductase pathway; glycine from L-threonine: step 1/2. In terms of biological role, catalyzes the NAD(+)-dependent oxidation of L-threonine to 2-amino-3-ketobutyrate. In Legionella pneumophila (strain Corby), this protein is L-threonine 3-dehydrogenase.